The following is a 339-amino-acid chain: Serine racemase (339 aa).

2 residues coordinate ATP: serine 43 and lysine 63. Residue lysine 68 is the Proton acceptor of the active site. Residue lysine 68 is modified to N6-(pyridoxal phosphate)lysine. A Ca(2+)-binding site is contributed by threonine 90. The active-site Proton acceptor is the serine 93. Asparagine 95 serves as a coordination point for pyridoxal 5'-phosphate. Cysteine 122 is subject to S-nitrosocysteine. Tyrosine 130 contributes to the ATP binding site. Aspartate 187 contacts Mg(2+). 3 residues coordinate pyridoxal 5'-phosphate: glycine 195, glycine 196, and glycine 197. Positions 219, 223, and 225 each coordinate Ca(2+). Mg(2+) is bound by residues glutamate 219, alanine 223, and aspartate 225. Residues glutamate 219, alanine 223, and aspartate 225 each contribute to the Mn(2+) site. Lysine 287 is a binding site for ATP. Serine 323 contributes to the pyridoxal 5'-phosphate binding site. Residue asparagine 326 participates in ATP binding.

The protein belongs to the serine/threonine dehydratase family. Requires Mg(2+) as cofactor. Mn(2+) is required as a cofactor. It depends on Ca(2+) as a cofactor. The cofactor is pyridoxal 5'-phosphate.

The enzyme catalyses L-serine = D-serine. It carries out the reaction L-serine = pyruvate + NH4(+). It catalyses the reaction D-serine = pyruvate + NH4(+). Catalyzes the synthesis of D-serine from L-serine. Has dehydratase activity towards both L-serine and D-serine. In Oryza sativa subsp. indica (Rice), this protein is Serine racemase.